The primary structure comprises 60 residues: Toxin 5 (60 aa).

4 disulfide bridges follow: Cys3–Cys22, Cys17–Cys39, Cys41–Cys52, and Cys53–Cys58.

Belongs to the three-finger toxin family. Short-chain subfamily. Type I alpha-neurotoxin sub-subfamily. In terms of tissue distribution, expressed by the venom gland.

It is found in the secreted. Its function is as follows. Binds to muscle nicotinic acetylcholine receptor (nAChR) and inhibit acetylcholine from binding to the receptor, thereby impairing neuromuscular transmission. The protein is Toxin 5 of Hydrophis schistosus (Beaked sea snake).